We begin with the raw amino-acid sequence, 232 residues long: Ubiquitin carboxyl-terminal hydrolase UCHL3 (232 aa).

One can recognise a UCH catalytic domain in the interval 6 to 225 (IWTPLESNPD…LRFSALAVIP (220 aa)). Positions 10-14 (LESNP) are interaction with ubiquitin. The active-site Nucleophile is Cys-92. A crossover loop which restricts access of large ubiquitin adducts to the active site region spans residues 151–159 (QVENRDDIL). An interaction with ubiquitin region spans residues 163–165 (THF). Catalysis depends on His-164, which acts as the Proton donor.

This sequence belongs to the peptidase C12 family.

It catalyses the reaction Thiol-dependent hydrolysis of ester, thioester, amide, peptide and isopeptide bonds formed by the C-terminal Gly of ubiquitin (a 76-residue protein attached to proteins as an intracellular targeting signal).. Functionally, thiol protease that recognizes and hydrolyzes a peptide bond at the C-terminal glycine of either ubiquitin or NEDD8. Essential for parasite blood stage survival. This chain is Ubiquitin carboxyl-terminal hydrolase UCHL3, found in Plasmodium falciparum (isolate 3D7).